A 245-amino-acid polypeptide reads, in one-letter code: Methyltransferase-like protein 27 (245 aa).

In Homo sapiens (Human), this protein is Methyltransferase-like protein 27.